The chain runs to 341 residues: Tetraacyldisaccharide 4'-kinase (341 aa).

Threonine 54 to threonine 61 is a binding site for ATP.

This sequence belongs to the LpxK family.

The enzyme catalyses a lipid A disaccharide + ATP = a lipid IVA + ADP + H(+). It participates in glycolipid biosynthesis; lipid IV(A) biosynthesis; lipid IV(A) from (3R)-3-hydroxytetradecanoyl-[acyl-carrier-protein] and UDP-N-acetyl-alpha-D-glucosamine: step 6/6. Functionally, transfers the gamma-phosphate of ATP to the 4'-position of a tetraacyldisaccharide 1-phosphate intermediate (termed DS-1-P) to form tetraacyldisaccharide 1,4'-bis-phosphate (lipid IVA). This Brucella ovis (strain ATCC 25840 / 63/290 / NCTC 10512) protein is Tetraacyldisaccharide 4'-kinase.